A 146-amino-acid chain; its full sequence is Kappa-casein (146 aa).

Thr-97, Thr-107, Thr-112, and Thr-118 each carry an O-linked (GalNAc...) threonine glycan. Phosphothreonine is present on Thr-121. Ser-125 bears the Phosphoserine; alternate mark. The O-linked (GalNAc...) serine; alternate glycan is linked to Ser-125. Thr-142 carries an O-linked (GalNAc...) threonine glycan. Phosphoserine is present on Ser-143.

The protein belongs to the kappa-casein family. Mammary gland specific. Secreted in milk.

It is found in the secreted. Its function is as follows. Kappa-casein stabilizes micelle formation, preventing casein precipitation in milk. This Panthera uncia (Snow leopard) protein is Kappa-casein (CSN3).